The sequence spans 381 residues: Succinate--CoA ligase [ADP-forming] subunit beta (381 aa).

The ATP-grasp domain occupies 9–236 (KTIFADAGIP…ESYEDDLERK (228 aa)). Residues Lys-45, 52–54 (GRG), Glu-91, Val-94, and Glu-99 each bind ATP. The Mg(2+) site is built by Asn-191 and Asp-205. Residues Asn-256 and 313-315 (GIT) each bind substrate.

Belongs to the succinate/malate CoA ligase beta subunit family. As to quaternary structure, heterotetramer of two alpha and two beta subunits. The cofactor is Mg(2+).

It catalyses the reaction succinate + ATP + CoA = succinyl-CoA + ADP + phosphate. It carries out the reaction GTP + succinate + CoA = succinyl-CoA + GDP + phosphate. It participates in carbohydrate metabolism; tricarboxylic acid cycle; succinate from succinyl-CoA (ligase route): step 1/1. In terms of biological role, succinyl-CoA synthetase functions in the citric acid cycle (TCA), coupling the hydrolysis of succinyl-CoA to the synthesis of either ATP or GTP and thus represents the only step of substrate-level phosphorylation in the TCA. The beta subunit provides nucleotide specificity of the enzyme and binds the substrate succinate, while the binding sites for coenzyme A and phosphate are found in the alpha subunit. The sequence is that of Succinate--CoA ligase [ADP-forming] subunit beta from Halorubrum lacusprofundi (strain ATCC 49239 / DSM 5036 / JCM 8891 / ACAM 34).